We begin with the raw amino-acid sequence, 207 residues long: dTTP/UTP pyrophosphatase (207 aa).

The Proton acceptor role is filled by Asp87.

The protein belongs to the Maf family. YhdE subfamily. It depends on a divalent metal cation as a cofactor.

It localises to the cytoplasm. It carries out the reaction dTTP + H2O = dTMP + diphosphate + H(+). It catalyses the reaction UTP + H2O = UMP + diphosphate + H(+). Its function is as follows. Nucleoside triphosphate pyrophosphatase that hydrolyzes dTTP and UTP. May have a dual role in cell division arrest and in preventing the incorporation of modified nucleotides into cellular nucleic acids. The polypeptide is dTTP/UTP pyrophosphatase (Nitrosomonas europaea (strain ATCC 19718 / CIP 103999 / KCTC 2705 / NBRC 14298)).